Consider the following 185-residue polypeptide: Meiotic expression up-regulated protein 31 (185 aa).

This is Meiotic expression up-regulated protein 31 (meu31) from Schizosaccharomyces pombe (strain 972 / ATCC 24843) (Fission yeast).